The following is a 483-amino-acid chain: V-type proton ATPase subunit B 2 (483 aa).

This sequence belongs to the ATPase alpha/beta chains family. In terms of assembly, V-ATPase is a heteromultimeric enzyme composed of a peripheral catalytic V1 complex (main components: subunits A, B, C, D, E, and F) attached to an integral membrane V0 proton pore complex (main component: the proteolipid protein).

Non-catalytic subunit of the peripheral V1 complex of vacuolar ATPase. V-ATPase is responsible for acidifying a variety of intracellular compartments in eukaryotic cells. In Hordeum vulgare (Barley), this protein is V-type proton ATPase subunit B 2.